Consider the following 659-residue polypeptide: MAKIHELSEILANQIAAGEVVERPASVVKELVENSIDAGAKQIDIIIEDAGLKSIQIIDDGNGIEAEDVETAFKRHATSKIIDRKDLFKVHTLGFRGEALPSIASVSDVVMETAVSGRAGTKIHIKGGEVLEKTLSASREGTTITVSDLFYNTPARLKYLKSVQTELSYISDIVNRLALSHTDVALSLTNNGRQLLQSAGNGNLQQTIGAIYGVQNARQMIKFEDANLDFKISGYTSLPKLTRASRNYISLLVNGRYVKNFQLTKAVIEGYGSKLMTGRYPITVLSIELDPTLVDVNVHPTKQEIKISKEDELVTFIQKTIFERIGQENLIPDGLQNIKSKTKEKLDFEQLKVGLNEASKQYQTKQHRTGITSEVTAALFGEKLTKDESQTQTNEKIKEETKVELSPIIIKDKQDLKSDRVKEWDEKYQSRNKETEVTSIAEKNGSVDDKRKDTPRFPTLRYIGQMHGTFLFAEGEEGLYIVDQHAAQERVKYEYYREEIGKVSPTQQNLLVPIVLTYPTTDALIIDENIDKLKELGIYLEDFGQNTYIIRQHPTWFKEGQEESIIREMIDYFLKDRKLSIAKFREKTAIMMSCKRSIKANHHLDDKQAKSILEQLKTCENPFNCPHGRPVLVKLSNKDLEHMFKRIQDPHHTGILEED.

It belongs to the DNA mismatch repair MutL/HexB family.

In terms of biological role, this protein is involved in the repair of mismatches in DNA. It is required for dam-dependent methyl-directed DNA mismatch repair. May act as a 'molecular matchmaker', a protein that promotes the formation of a stable complex between two or more DNA-binding proteins in an ATP-dependent manner without itself being part of a final effector complex. The protein is DNA mismatch repair protein MutL of Ligilactobacillus salivarius (strain UCC118) (Lactobacillus salivarius).